Here is a 226-residue protein sequence, read N- to C-terminus: Urease accessory protein UreF (226 aa).

Belongs to the UreF family. In terms of assembly, ureD, UreF and UreG form a complex that acts as a GTP-hydrolysis-dependent molecular chaperone, activating the urease apoprotein by helping to assemble the nickel containing metallocenter of UreC. The UreE protein probably delivers the nickel.

It is found in the cytoplasm. Functionally, required for maturation of urease via the functional incorporation of the urease nickel metallocenter. The chain is Urease accessory protein UreF from Burkholderia ambifaria (strain ATCC BAA-244 / DSM 16087 / CCUG 44356 / LMG 19182 / AMMD) (Burkholderia cepacia (strain AMMD)).